The chain runs to 788 residues: Pyridoxal-dependent decarboxylase domain-containing protein 1 (788 aa).

Over residues glutamate 28 to lysine 40 the composition is skewed to basic and acidic residues. Residues glutamate 28–leucine 51 are disordered. Threonine 414 carries the phosphothreonine modification. Serine 652 is modified (phosphoserine). The segment at alanine 684 to arginine 788 is disordered. Phosphothreonine occurs at positions 687 and 691. Phosphoserine is present on residues serine 710, serine 718, and serine 722. Residues histidine 725–arginine 734 show a composition bias toward basic and acidic residues. The span at glycine 738–glutamate 750 shows a compositional bias: polar residues. Phosphoserine is present on residues serine 748, serine 757, serine 779, and serine 786. The span at proline 772 to arginine 788 shows a compositional bias: basic and acidic residues.

This sequence belongs to the group II decarboxylase family. Requires pyridoxal 5'-phosphate as cofactor.

The sequence is that of Pyridoxal-dependent decarboxylase domain-containing protein 1 (PDXDC1) from Homo sapiens (Human).